Here is a 464-residue protein sequence, read N- to C-terminus: ATP synthase subunit beta (464 aa).

153 to 160 (GGAGVGKT) is an ATP binding site.

This sequence belongs to the ATPase alpha/beta chains family. In terms of assembly, F-type ATPases have 2 components, CF(1) - the catalytic core - and CF(0) - the membrane proton channel. CF(1) has five subunits: alpha(3), beta(3), gamma(1), delta(1), epsilon(1). CF(0) has three main subunits: a(1), b(2) and c(9-12). The alpha and beta chains form an alternating ring which encloses part of the gamma chain. CF(1) is attached to CF(0) by a central stalk formed by the gamma and epsilon chains, while a peripheral stalk is formed by the delta and b chains.

The protein localises to the cell inner membrane. It catalyses the reaction ATP + H2O + 4 H(+)(in) = ADP + phosphate + 5 H(+)(out). In terms of biological role, produces ATP from ADP in the presence of a proton gradient across the membrane. The catalytic sites are hosted primarily by the beta subunits. This chain is ATP synthase subunit beta, found in Burkholderia orbicola (strain MC0-3).